Consider the following 343-residue polypeptide: Phenylalanine--tRNA ligase alpha subunit (343 aa).

E264 contacts Mg(2+).

Belongs to the class-II aminoacyl-tRNA synthetase family. Phe-tRNA synthetase alpha subunit type 1 subfamily. Tetramer of two alpha and two beta subunits. It depends on Mg(2+) as a cofactor.

It localises to the cytoplasm. It carries out the reaction tRNA(Phe) + L-phenylalanine + ATP = L-phenylalanyl-tRNA(Phe) + AMP + diphosphate + H(+). The sequence is that of Phenylalanine--tRNA ligase alpha subunit from Aromatoleum aromaticum (strain DSM 19018 / LMG 30748 / EbN1) (Azoarcus sp. (strain EbN1)).